We begin with the raw amino-acid sequence, 328 residues long: Malate dehydrogenase (328 aa).

12-18 (GAAGQIG) lines the NAD(+) pocket. Substrate-binding residues include Arg-92 and Arg-98. NAD(+) is bound by residues Asn-105, Gln-112, and 129–131 (TGN). Substrate is bound by residues Asn-131 and Arg-162. His-187 serves as the catalytic Proton acceptor.

Belongs to the LDH/MDH superfamily. MDH type 2 family.

The enzyme catalyses (S)-malate + NAD(+) = oxaloacetate + NADH + H(+). Its function is as follows. Catalyzes the reversible oxidation of malate to oxaloacetate. The chain is Malate dehydrogenase from Nocardioides sp. (strain ATCC BAA-499 / JS614).